The primary structure comprises 646 residues: Beta-galactosidase-1-like protein (646 aa).

Residues 1-23 form the signal peptide; it reads MPPDLPSLLLRLVVLLLLSQAEA. N-linked (GlcNAc...) asparagine glycosylation occurs at asparagine 93. The active-site Proton donor is the glutamate 182. Asparagine 239 carries an N-linked (GlcNAc...) asparagine glycan. Glutamate 260 serves as the catalytic Nucleophile.

The protein belongs to the glycosyl hydrolase 35 family.

Its subcellular location is the secreted. Its function is as follows. Probable glycosyl hydrolase. The chain is Beta-galactosidase-1-like protein (Glb1l) from Mus musculus (Mouse).